Reading from the N-terminus, the 894-residue chain is Protein NLP9 (894 aa).

The RWP-RK domain maps to 517–603 (QEISGARRLE…LDSVQGVEGG (87 aa)). A coiled-coil region spans residues 578–598 (RKINKVNRSLRKIQTVLDSVQ). The tract at residues 732–763 (NTRIERGNGTVEPNHSISSSMSDSSNSSGAVL) is disordered. A compositionally biased stretch (low complexity) spans 747-763 (SISSSMSDSSNSSGAVL). In terms of domain architecture, PB1 spans 792 to 875 (TLTVKATYRE…HTVKFLVRDI (84 aa)).

It localises to the nucleus. In terms of biological role, probable transcription factor. This is Protein NLP9 (NLP9) from Arabidopsis thaliana (Mouse-ear cress).